A 535-amino-acid polypeptide reads, in one-letter code: Nuclear/nucleolar GTPase 2 (535 aa).

A disordered region spans residues 1–42 (MAKKKERAVNVSGKPRHSLDVNRANDKKGAGGGAGGGGGGRS). A compositionally biased stretch (basic and acidic residues) spans 17-29 (HSLDVNRANDKKG). Residues 30–41 (AGGGAGGGGGGR) show a composition bias toward gly residues. One can recognise a CP-type G domain in the interval 213 to 374 (WGELYKVIDS…LIDCPGVVYQ (162 aa)). The interval 261 to 264 (NKCD) is G4. The interval 290–292 (SIN) is G5. The segment at 323–330 (GYPNVGKS) is G1. Residues 349–353 (GETKV) are G2. The tract at residues 367–370 (DCPG) is G3. A disordered region spans residues 464-494 (FFVPPPQQGEDSPSETAEPVEKSDEEGVSSD).

It belongs to the TRAFAC class YlqF/YawG GTPase family. RsgA subfamily. In terms of assembly, interacts (via N-terminus) with the 60S ribosomal proteins RPL10A. This interaction is enhanced by the addition of GTP. Expressed in roots, shoot apical meristem, leaves, leaf sheaths and flowers.

It localises to the nucleus. The protein resides in the nucleolus. Its activity is regulated as follows. The GTPase activity is stimulated in the presence of ribosomes, particularly of the 60S subunit. Functionally, GTPase involved in pre-60S ribosomal subunit maturation. The polypeptide is Nuclear/nucleolar GTPase 2 (Oryza sativa subsp. japonica (Rice)).